We begin with the raw amino-acid sequence, 87 residues long: Small ribosomal subunit protein uS17 (87 aa).

It belongs to the universal ribosomal protein uS17 family. In terms of assembly, part of the 30S ribosomal subunit.

In terms of biological role, one of the primary rRNA binding proteins, it binds specifically to the 5'-end of 16S ribosomal RNA. This is Small ribosomal subunit protein uS17 from Onion yellows phytoplasma (strain OY-M).